The chain runs to 486 residues: Probable FAD-binding monooxygenase ltbD (486 aa).

Residues 186-243 (PAGDGGTNDQGPSRAQSTASSGGSGRPRSTESPQSGAQASTTPTSPPTTQSTGDDPAA) form a disordered region. The span at 194 to 206 (DQGPSRAQSTASS) shows a compositional bias: polar residues. Low complexity predominate over residues 220-241 (SGAQASTTPTSPPTTQSTGDDP).

Belongs to the FAD-binding monooxygenase family. Homodimer. FAD serves as cofactor.

In terms of biological role, probable FAD-binding monooxygenase; part of the gene cluster that mediates the biosynthesis of luteodienoside A, a glycosylated polyketide consisting of an unusual 1-O-beta-D-glucopyranosyl-myo-inositol (glucinol) ester of 3-hydroxy-2,2,4-trimethylocta-4,6-dienoic acid. The HR-PKS ltbA produces the trimethylated polyketide chain from acetyl-CoA, malonyl-CoA and S-adenosylmethionine (SAM), and the ltbA cAT domain then uses glucinol produced by the glycosyltransferase ltbB as an offloading substrate to release luteodienoside A. Since ltbA and ltbB are sufficient for the biosynthesis of luteodienoside A, the functions of the methyltransferase ltbC and the FAD-binding monooxygenase ltbD within the pathway remain obscur. This chain is Probable FAD-binding monooxygenase ltbD, found in Aspergillus luteorubrus.